The chain runs to 637 residues: 1-deoxy-D-xylulose-5-phosphate synthase (637 aa).

Residues His-76 and 117-119 (GHS) contribute to the thiamine diphosphate site. Asp-148 contacts Mg(2+). Thiamine diphosphate-binding positions include 149 to 150 (GA), Asn-177, Tyr-294, and Glu-381. Asn-177 is a binding site for Mg(2+).

The protein belongs to the transketolase family. DXPS subfamily. Homodimer. Mg(2+) serves as cofactor. Thiamine diphosphate is required as a cofactor.

The enzyme catalyses D-glyceraldehyde 3-phosphate + pyruvate + H(+) = 1-deoxy-D-xylulose 5-phosphate + CO2. It participates in metabolic intermediate biosynthesis; 1-deoxy-D-xylulose 5-phosphate biosynthesis; 1-deoxy-D-xylulose 5-phosphate from D-glyceraldehyde 3-phosphate and pyruvate: step 1/1. In terms of biological role, catalyzes the acyloin condensation reaction between C atoms 2 and 3 of pyruvate and glyceraldehyde 3-phosphate to yield 1-deoxy-D-xylulose-5-phosphate (DXP). This is 1-deoxy-D-xylulose-5-phosphate synthase from Neisseria gonorrhoeae (strain NCCP11945).